The following is a 284-amino-acid chain: 4-hydroxy-3-methylbut-2-enyl diphosphate reductase (284 aa).

A [4Fe-4S] cluster-binding site is contributed by C12. (2E)-4-hydroxy-3-methylbut-2-enyl diphosphate contacts are provided by H40 and H72. Residues H40 and H72 each contribute to the dimethylallyl diphosphate site. Isopentenyl diphosphate is bound by residues H40 and H72. C94 is a [4Fe-4S] cluster binding site. H122 contributes to the (2E)-4-hydroxy-3-methylbut-2-enyl diphosphate binding site. H122 provides a ligand contact to dimethylallyl diphosphate. H122 provides a ligand contact to isopentenyl diphosphate. The active-site Proton donor is the E124. T161 lines the (2E)-4-hydroxy-3-methylbut-2-enyl diphosphate pocket. C193 provides a ligand contact to [4Fe-4S] cluster. (2E)-4-hydroxy-3-methylbut-2-enyl diphosphate contacts are provided by S221, N223, and S264. Dimethylallyl diphosphate is bound by residues S221, N223, and S264. The isopentenyl diphosphate site is built by S221, N223, and S264.

It belongs to the IspH family. The cofactor is [4Fe-4S] cluster.

The catalysed reaction is isopentenyl diphosphate + 2 oxidized [2Fe-2S]-[ferredoxin] + H2O = (2E)-4-hydroxy-3-methylbut-2-enyl diphosphate + 2 reduced [2Fe-2S]-[ferredoxin] + 2 H(+). It carries out the reaction dimethylallyl diphosphate + 2 oxidized [2Fe-2S]-[ferredoxin] + H2O = (2E)-4-hydroxy-3-methylbut-2-enyl diphosphate + 2 reduced [2Fe-2S]-[ferredoxin] + 2 H(+). It participates in isoprenoid biosynthesis; dimethylallyl diphosphate biosynthesis; dimethylallyl diphosphate from (2E)-4-hydroxy-3-methylbutenyl diphosphate: step 1/1. It functions in the pathway isoprenoid biosynthesis; isopentenyl diphosphate biosynthesis via DXP pathway; isopentenyl diphosphate from 1-deoxy-D-xylulose 5-phosphate: step 6/6. Its function is as follows. Catalyzes the conversion of 1-hydroxy-2-methyl-2-(E)-butenyl 4-diphosphate (HMBPP) into a mixture of isopentenyl diphosphate (IPP) and dimethylallyl diphosphate (DMAPP). Acts in the terminal step of the DOXP/MEP pathway for isoprenoid precursor biosynthesis. This is 4-hydroxy-3-methylbut-2-enyl diphosphate reductase from Dehalococcoides mccartyi (strain CBDB1).